The primary structure comprises 72 residues: uncharacterized protein (72 aa).

This is an uncharacterized protein from Acidianus filamentous virus 2 (isolate Italy/Pozzuoli) (AFV-2).